The following is an 837-amino-acid chain: Exonuclease 1 (837 aa).

The segment at 1–99 (MGIQGLLQFI…RSRRERRQSN (99 aa)) is N-domain. Mg(2+)-binding residues include Asp-30, Asp-78, Glu-150, Asp-152, Asp-171, Asp-173, and Asp-225. Positions 129–386 (MAHKVIKAAR…RLEVNSVSHA (258 aa)) are interaction with MSH3. Positions 138–229 (RALGVDCLVA…ILSGCDYLAS (92 aa)) are I-domain. 2 disordered regions span residues 345–367 (TMPAHSRSHSWNEKAGQKPPGTN) and 440–477 (IKENGCGDGTSPNSSKMSKSCPDSGTAHKTDAHTPSKM). Residues 387 to 488 (PQLKEKPSTL…NKFATFLQRR (102 aa)) form an interaction with MLH1 region. Positions 449 to 462 (TSPNSSKMSKSCPD) are enriched in polar residues. Lys-480 is subject to N6-acetyllysine. The interval 555 to 589 (NGTHNLSSQIPGNAAVSPEDEAQSSETSKLLGAMS) is disordered. A compositionally biased stretch (polar residues) spans 556–565 (GTHNLSSQIP). Phosphoserine is present on residues Ser-589 and Ser-601. The interaction with MSH2 stretch occupies residues 591–837 (PSLGTLRSCF…CVRAQRAIFH (247 aa)). The segment at 608-740 (EFSRTPSPSA…GLCRSSSMDS (133 aa)) is disordered. 3 stretches are compositionally biased toward polar residues: residues 611 to 623 (RTPSPSASTTLQQ), 665 to 690 (SSRSQESMDSSCGLNTSSLSQPSSRD), and 699 to 713 (NNKSLDNQGEQNSKQ). Thr-612 is modified (phosphothreonine). Phosphoserine is present on residues Ser-614 and Ser-666. The residue at position 737 (Ser-737) is a Phosphoserine. The interaction with MLH1 stretch occupies residues 778–837 (LQTKISELWKNFGFKKDSEKLPSCKKPLSPVKDNIQLTPETEDEIFNKPECVRAQRAIFH).

This sequence belongs to the XPG/RAD2 endonuclease family. EXO1 subfamily. Interacts with the MLH1-PMS2 heterodimer via MLH1. Interacts with MSH3. Interacts with the MSH2-MSH6 heterodimer via MSH2, and this interaction may increase the processivity of the 5'-&gt;3' exonuclease activity. Interacts with PCNA, and this interaction may both stimulate the cryptic 3'-&gt;5' exonuclease activity and suppress the 5'-&gt;3' exonuclease activity. Interacts with WRN, and this interaction stimulates both the 5'-&gt;3' exonuclease activity and cleavage of 5'-overhanging flap structures. Interacts with RECQL/RECQ1, and this interaction stimulates cleavage of 5'-overhanging flap structures. Interacts with DNA helicase ZGRF1; the interaction is increased following DNA damage induction. Requires Mg(2+) as cofactor. Phosphorylated upon DNA damage and in response to agents stalling DNA replication, probably by ATM or ATR. Highly expressed in the spleen and testis. Also expressed in the bone marrow, brain, lung, lymph node and thymus.

Its subcellular location is the nucleus. 5'-&gt;3' double-stranded DNA exonuclease which may also possess a cryptic 3'-&gt;5' double-stranded DNA exonuclease activity. Functions in DNA mismatch repair (MMR) to excise mismatch-containing DNA tracts directed by strand breaks located either 5' or 3' to the mismatch. Also exhibits endonuclease activity against 5'-overhanging flap structures similar to those generated by displacement synthesis when DNA polymerase encounters the 5'-end of a downstream Okazaki fragment. Required for somatic hypermutation (SHM) and class switch recombination (CSR) of immunoglobulin genes. Essential for male and female meiosis. The sequence is that of Exonuclease 1 (Exo1) from Mus musculus (Mouse).